A 98-amino-acid chain; its full sequence is Alpha-elicitin DRE-alpha (98 aa).

3 disulfide bridges follow: Cys-3/Cys-71, Cys-27/Cys-56, and Cys-51/Cys-95.

The protein belongs to the elicitin family.

The protein resides in the secreted. In terms of biological role, induces local and distal defense responses (incompatible hypersensitive reaction) in plants from the solanaceae and cruciferae families. Elicits leaf necrosis and causes the accumulation of pathogenesis-related proteins. Might interact with the lipidic molecules of the plasma membrane. This Phytophthora drechsleri protein is Alpha-elicitin DRE-alpha.